A 144-amino-acid polypeptide reads, in one-letter code: Endoribonuclease YbeY (144 aa).

3 residues coordinate Zn(2+): His105, His109, and Asp115.

This sequence belongs to the endoribonuclease YbeY family. The cofactor is Zn(2+).

The protein resides in the cytoplasm. Single strand-specific metallo-endoribonuclease involved in late-stage 70S ribosome quality control and in maturation of the 3' terminus of the 16S rRNA. The chain is Endoribonuclease YbeY from Chlorobium limicola (strain DSM 245 / NBRC 103803 / 6330).